A 431-amino-acid polypeptide reads, in one-letter code: E3 ubiquitin-protein ligase marc-3 (431 aa).

The RING-CH-type zinc-finger motif lies at 5–74 (NASLGPAVCR…EICKFAFKIK (70 aa)). Residues Cys-13, Cys-16, Cys-38, Cys-40, His-48, Cys-51, Cys-64, and Cys-67 each coordinate Zn(2+). 2 helical membrane-spanning segments follow: residues 98-118 (PFID…GVFM) and 157-177 (LFLF…VSAL). Disordered stretches follow at residues 267–289 (TSPD…FGRR) and 327–349 (SRAT…RDMR). The segment covering 273 to 282 (NTHHHDESRN) has biased composition (basic and acidic residues).

It localises to the cell membrane. Its subcellular location is the endosome membrane. It catalyses the reaction S-ubiquitinyl-[E2 ubiquitin-conjugating enzyme]-L-cysteine + [acceptor protein]-L-lysine = [E2 ubiquitin-conjugating enzyme]-L-cysteine + N(6)-ubiquitinyl-[acceptor protein]-L-lysine.. The protein operates within protein modification; protein ubiquitination. E3 ubiquitin-protein ligase which positively regulates the fast polyspermy block during fertilization, preventing entry of more than one sperm into the oocyte. After fertilization, required in the zygote for the selective degradation of a subset of maternal membrane proteins including cav-1, chs-1 and rme-2, probably by mediating their K63-linked polyubiquitination. The protein is E3 ubiquitin-protein ligase marc-3 of Caenorhabditis elegans.